The chain runs to 624 residues: DNA-directed RNA polymerase subunit gamma (624 aa).

Residues cysteine 70, cysteine 72, cysteine 85, and cysteine 88 each coordinate Zn(2+). 3 residues coordinate Mg(2+): aspartate 466, aspartate 468, and aspartate 470.

This sequence belongs to the RNA polymerase beta' chain family. RpoC1 subfamily. In terms of assembly, in cyanobacteria the RNAP catalytic core is composed of 2 alpha, 1 beta, 1 beta', 1 gamma and 1 omega subunit. When a sigma factor is associated with the core the holoenzyme is formed, which can initiate transcription. Mg(2+) is required as a cofactor. Requires Zn(2+) as cofactor.

It catalyses the reaction RNA(n) + a ribonucleoside 5'-triphosphate = RNA(n+1) + diphosphate. DNA-dependent RNA polymerase catalyzes the transcription of DNA into RNA using the four ribonucleoside triphosphates as substrates. The sequence is that of DNA-directed RNA polymerase subunit gamma from Synechococcus sp. (strain ATCC 27144 / PCC 6301 / SAUG 1402/1) (Anacystis nidulans).